Reading from the N-terminus, the 102-residue chain is Large ribosomal subunit protein eL21 (102 aa).

Basic residues predominate over residues 1-21 (MVRRSKGFRSRTRKKLRKKPR). The tract at residues 1 to 33 (MVRRSKGFRSRTRKKLRKKPRERGLSPLGPMTQ) is disordered.

This sequence belongs to the eukaryotic ribosomal protein eL21 family.

The sequence is that of Large ribosomal subunit protein eL21 from Methanopyrus kandleri (strain AV19 / DSM 6324 / JCM 9639 / NBRC 100938).